The sequence spans 683 residues: Kinesin-like protein KIF2B (683 aa).

Thr125 is subject to Phosphothreonine; by PLK1. Positions 141-176 (LMTQRKSACLREIEKLQKQRERRRRLHREIRAQRAR) form a coiled coil. Ser204 is modified (phosphoserine; by PLK1). One can recognise a Kinesin motor domain in the interval 213–543 (RICVCVRKRP…LRYANRVKEI (331 aa)). 303-310 (GQTGSGKT) contacts ATP. The stretch at 640-672 (QLLSILEKKIDILTEIRRKLKLLQADIQKENRH) forms a coiled coil.

It belongs to the TRAFAC class myosin-kinesin ATPase superfamily. Kinesin family. MCAK/KIF2 subfamily. In terms of processing, phosphorylation at Thr-125 by PLK1 is required for activity in the correction of kinetochore-microtubules attachment errors, while phosphorylation at Ser-204 also by PLK1 is required for the kinetochore localization and activity in prometaphase.

It is found in the cytoplasm. The protein localises to the cytoskeleton. It localises to the microtubule organizing center. The protein resides in the centrosome. Its subcellular location is the spindle. It is found in the chromosome. The protein localises to the centromere. It localises to the kinetochore. Plus end-directed microtubule-dependent motor required for spindle assembly and chromosome movement during mitosis. Has microtubule depolymerization activity. Plays a role in chromosome congression. The polypeptide is Kinesin-like protein KIF2B (Bos taurus (Bovine)).